Here is a 569-residue protein sequence, read N- to C-terminus: Adenine deaminase (569 aa).

It belongs to the metallo-dependent hydrolases superfamily. Adenine deaminase family. Mn(2+) serves as cofactor.

It catalyses the reaction adenine + H2O + H(+) = hypoxanthine + NH4(+). In Desulfitobacterium hafniense (strain Y51), this protein is Adenine deaminase.